Consider the following 285-residue polypeptide: Protease HtpX homolog (285 aa).

2 helical membrane-spanning segments follow: residues 7 to 27 (TAML…MIGG) and 30 to 50 (GMTI…WFSD). Histidine 131 provides a ligand contact to Zn(2+). Glutamate 132 is an active-site residue. Position 135 (histidine 135) interacts with Zn(2+). 2 helical membrane passes run 146–166 (ITAT…FFGG) and 177–197 (IAGI…QMAI). A Zn(2+)-binding site is contributed by glutamate 202.

This sequence belongs to the peptidase M48B family. Zn(2+) serves as cofactor.

It localises to the cell inner membrane. The chain is Protease HtpX homolog from Burkholderia cenocepacia (strain ATCC BAA-245 / DSM 16553 / LMG 16656 / NCTC 13227 / J2315 / CF5610) (Burkholderia cepacia (strain J2315)).